Reading from the N-terminus, the 262-residue chain is Lysine 5,6-aminomutase beta subunit (262 aa).

Residues 120-262 form the B12-binding domain; the sequence is KIVVVGASTG…VKTLNDRMNS (143 aa). Adenosylcob(III)alamin-binding positions include 130-136 and His133; that span reads TDAHTVG. Lys144 is modified (N6-(pyridoxal phosphate)lysine). Residues 185–192, 219–223, and 239–244 each bind adenosylcob(III)alamin; these read LVSQTVTQ, LCGGP, and FGPGRF.

The protein belongs to the KamE family. In terms of assembly, heterotetramer of 2 alpha and 2 beta subunits. Requires adenosylcob(III)alamin as cofactor. The cofactor is pyridoxal 5'-phosphate.

It carries out the reaction (3S)-3,6-diaminohexanoate = (3S,5S)-3,5-diaminohexanoate. The enzyme catalyses D-lysine = (2R,5S)-2,5-diaminohexanoate. It functions in the pathway amino-acid metabolism; lysine degradation. With respect to regulation, rapidly inactivated in the presence of D-lysine and to a lesser extent in the absence of adenosylcobalamin (Adocbl). Activity is stable in the presence of Adocbl when D-lysine is absent. Adocbl imparts thermal stability at 37 degrees Celsius. In terms of biological role, catalyzes the migration of the L-beta-lysine and D-lysine epsilon amino group to the delta carbon to produce 3,5-diaminohexanoate and 2,5-diaminohexanoate, respectively. In Acetoanaerobium sticklandii (strain ATCC 12662 / DSM 519 / JCM 1433 / CCUG 9281 / NCIMB 10654 / HF) (Clostridium sticklandii), this protein is Lysine 5,6-aminomutase beta subunit (kamE).